A 391-amino-acid chain; its full sequence is Putative neutrophil cytosol factor 1B (391 aa).

The 126-residue stretch at M1–L126 folds into the PX domain. SH3 domains lie at I157–S216 and Y227–Q286. The segment at Q286–V391 is disordered. 2 positions are modified to phosphoserine: S304 and S305. Residues H310 to R319 show a composition bias toward basic residues. A phosphoserine mark is found at S321, S329, S346, and S349.

It is found in the cytoplasm. Its function is as follows. May be required for activation of the latent NADPH oxidase (necessary for superoxide production). The chain is Putative neutrophil cytosol factor 1B (NCF1B) from Homo sapiens (Human).